Reading from the N-terminus, the 2587-residue chain is MGKYKRAGETSRKTRVKMHKSGKNWVRTLISQIGLMHFLGGSISEKKINVDVYEQKNISASTILKGAVALGALTGATVVSGNVFADETVLAKETTLTTTDANEVKLSSENFDSEKAEEKISLSQSESASESVSESISESVSESVSTSESVSESVSESVSESISESVSESISESISESVSESTSTSIVLSESGAASGNKATSKGTEEKQDSVRENLDKMISEAEVLNDMAARKLITLDAEQQLELMKSLVATQSQLEATKNLIGDPNATVADLQIAYTTLGNNTQALGNELIKLNPNGQIYAVLNNTEASRAATLRSTTTGTKTTFTISDFSNGGTQYYWAGGNANNLKNPISSISAVYDSATGKISWTVEYDPTTILKSPALKTLKTYTGIYIDTSSDSKLSTPTNVLIDGAATNPVTNFYGNGSKGIEYVSKGTTKGVTKHTITFDTAFSGRANDLADLKIKMLAATTLSDPHFYEDGSKGNYGRYNGQTAPYVIANDSGTAIGGYQVSGVNADSIPSDTTSQSESTSKSESTSKSISESVIESISESVIGSVSESVSESVSESVSESITESVSESVSESISESVSESVSESISESVSESVSESISESVSESVSESISESVSESVSESISESISESVSESVSESISESVSESVSESISESVSESVSESISESVSESVSESISESVSESVSESISESVSESVSESISESVSESVSESISESVSESVSESISESVSESVSESISESVSESVSESISESVSESVSESISESVSESVSESVSESVSESVSESISESVSESVSESVSESVSESVSESVSESISESVSESVSESISESVSESVSESISESVSESVSESISESVSESVSESISESVSESVSESISESVSESVSESISESVSESVSESISESVSESVSESISESVSESVSESISESVSESVSESVSESVSESVSESVSESVSESISESVSESVSESISESVSESVSESISESVSESVSESISESVSESVSESISESVSESVSESVSESVSESVSESVSESVSESISESVSESVSESVSESISESVSESVSESISESVSESVSESISESVSESVSESVSESVSESVSESISESVSESVSESISESVSESVSESISESVSESVSESISESVSESVSESISESVSESVSESISESVSESVSESVSESVSESVSESISESVSESVSESISESVSESVSESVSESISESVSESVSESISESVSESVSESISESVSESVSESISESVSESVSESVSESVSESVSESVSESVSESVSESVSESISESVSESVSESVSESISESVSESVSESISESVSESVSESISESVSESVSESISESVSESVSESISESVSESVSESISESVSESVSESVSESVSESVSESISESVSESVSESISESVSESVSESISESVSESVSESISESVSESVSESVSESISESVSESVSESISESVSESVSESISESVSESVSESVSESVSESVSESVSESVSESVSESISESVSESVSESISESVSESVSESISESVSESVSESISESVSESVSESISESVSESVSESISESVSESVSESISESVSESVSESVSESVSESVSESISESVSESVSESISESVSESVSESVSESVSESVSESVSESVSESVSESISESVSESVSESVSESVSESVSESISESVSESVSESISESVSESVSESISESVSESVSESISESVSESVSESISESVSESVSESISESVSESVSESISESVSESVSESVSESVSESVSESVSESVSESISESVSESVSESISESVSESVSESISESVSESVSESVSESVSESVSESISESVSESVSESISESVSESVSESISESVSESVSESISESVSESVSESVSESISESVSESVSESISESVSESVSESISESVSESVSESISESVSESVSESISESVSESVSESISESVSESVSESVSESVSESVSESISESVSESISESVSESVSESISESVSESVSESISESVSESVSESISESVSESVSESISESVSESVSESISESVSESVSESISESVSESVSESISESVSESVSESVSESISESVSESVSESISESVSESVSESISESVSESVSESVSESVSESVSESVSESVSESVSESISESVSESVSESISESVSESVSESISESVSESVSESISESVSESVSESISESVSESVSESISESVSESVSESISESVSESVSESVSESVSESVSESISESVSESVSESVSESISESVSESVSESISESVSESVSESVSESVSESVSESVSESVSESVSESISESVSESVSESVSESVSESVSESISESVSESVSESISESVSESVSESISESVSESVSESISESVSESVSESISESVSESVSESISESVSESVSESISESVSESVSESISESVSESVSESVSESISESVSESVSESISESVSESVSESISESVSESVSESISESVSESVSESVSESVSESVSESVSESVSESISESVSESVSESISESVSESVSESVSESVSESVSESISESVSESISESVSESVSESISESVSESVSESISERTLPNTGENVSSSLGLVGLSGLLFGALLGRKKRKSEDAE.

An N-terminal signal peptide occupies residues 1–85 (MGKYKRAGET…ATVVSGNVFA (85 aa)). Disordered stretches follow at residues 107–158 (SSEN…SESV), 173–212 (SISESVSESTSTSIVLSESGAASGNKATSKGTEEKQDSVR), 515–539 (DSIPSDTTSQSESTSKSESTSKSIS), and 568–2558 (ESIT…GENV). The tract at residues 107-195 (SSENFDSEKA…IVLSESGAAS (89 aa)) is ser-rich region 1, SRR1. Low complexity-rich tracts occupy residues 121–158 (SLSQSESASESVSESISESVSESVSTSESVSESVSESV) and 173–191 (SISESVSESTSTSIVLSES). The tract at residues 191–522 (SGAASGNKAT…NADSIPSDTT (332 aa)) is sufficient to block adherence to beads. Positions 192–202 (GAASGNKATSK) are enriched in polar residues. The segment covering 203–212 (GTEEKQDSVR) has biased composition (basic and acidic residues). Residues 516 to 2561 (SIPSDTTSQS…PNTGENVSSS (2046 aa)) are ser-rich region 2, SRR2. 2 stretches are compositionally biased toward low complexity: residues 519–539 (SDTTSQSESTSKSESTSKSIS) and 568–2545 (ESIT…VSES). The tract at residues 2367 to 2587 (SESISESVSE…RKKRKSEDAE (221 aa)) is required for localization to cell wall, fimbriae formation and adherence to saliva-coated hydroxyapatite beads (SHA) but not secretion. The short motif at 2551–2555 (LPNTG) is the LPXTG sorting signal element. At T2554 the chain carries Pentaglycyl murein peptidoglycan amidated threonine. Residues 2555–2587 (GENVSSSLGLVGLSGLLFGALLGRKKRKSEDAE) constitute a propeptide, removed by sortase.

This sequence belongs to the serine-rich repeat protein (SRRP) family. Post-translationally, glycosylated; occurs within the cytoplasm. It is probable that most of the Ser residues in SSR1 and SSR2 are O-GlcNAcylated. Sequential glycosylation by sugar transferases are able to generate complex sugar polymorphisms.

Its subcellular location is the cytoplasm. The protein localises to the secreted. It localises to the cell wall. The protein resides in the fimbrium. The major structural element of fimbriae. Required for adherence to saliva-coated hydroxyapatite beads (SHA), an in vitro tooth model. A Fap1-dependent increase in adherence is seen as the pH is reduced from pH 8 to pH 5. The sequence is that of Fap1 adhesin (fap1) from Streptococcus parasanguinis.